The sequence spans 338 residues: H(2)-forming methylenetetrahydromethanopterin dehydrogenase-related protein MJ0715 (338 aa).

It belongs to the HMD family.

This Methanocaldococcus jannaschii (strain ATCC 43067 / DSM 2661 / JAL-1 / JCM 10045 / NBRC 100440) (Methanococcus jannaschii) protein is H(2)-forming methylenetetrahydromethanopterin dehydrogenase-related protein MJ0715.